The chain runs to 102 residues: MGKTGNIEHVEERVESELMPPSMYKVILNNDDYTPMDFVIEVLQIFFRKNEQEATDIMLTIHHQGKGICGIFPYGIAETKVIQVNQFARQNQHPLLCSLEKA.

Belongs to the ClpS family. Binds to the N-terminal domain of the chaperone ClpA.

Involved in the modulation of the specificity of the ClpAP-mediated ATP-dependent protein degradation. The protein is ATP-dependent Clp protease adapter protein ClpS of Shewanella sp. (strain ANA-3).